We begin with the raw amino-acid sequence, 143 residues long: Hemoglobin subunit alpha-1 (143 aa).

Serine 2 is subject to N-acetylserine. One can recognise a Globin domain in the interval 2 to 143; sequence SLTAKDKDTV…LSRALAEKYR (142 aa). Histidine 60 is a binding site for O2. Histidine 89 is a binding site for heme b.

It belongs to the globin family. Hb1 is a heterotetramer of two alpha-1 chains and two beta-1 chains. Red blood cells.

Functionally, involved in oxygen transport from gills to the various peripheral tissues. In Anarhichas minor (Arctic spotted wolffish), this protein is Hemoglobin subunit alpha-1 (hba1).